Consider the following 297-residue polypeptide: Phosphoribosylaminoimidazole-succinocarboxamide synthase (297 aa).

Belongs to the SAICAR synthetase family.

It carries out the reaction 5-amino-1-(5-phospho-D-ribosyl)imidazole-4-carboxylate + L-aspartate + ATP = (2S)-2-[5-amino-1-(5-phospho-beta-D-ribosyl)imidazole-4-carboxamido]succinate + ADP + phosphate + 2 H(+). It functions in the pathway purine metabolism; IMP biosynthesis via de novo pathway; 5-amino-1-(5-phospho-D-ribosyl)imidazole-4-carboxamide from 5-amino-1-(5-phospho-D-ribosyl)imidazole-4-carboxylate: step 1/2. The protein is Phosphoribosylaminoimidazole-succinocarboxamide synthase of Corynebacterium glutamicum (strain ATCC 13032 / DSM 20300 / JCM 1318 / BCRC 11384 / CCUG 27702 / LMG 3730 / NBRC 12168 / NCIMB 10025 / NRRL B-2784 / 534).